A 127-amino-acid polypeptide reads, in one-letter code: UPF0716 protein YtzA (127 aa).

4 helical membrane passes run 3 to 22 (FLFL…FLFL), 26 to 46 (IGIL…AAAA), 70 to 90 (AIAD…PGFL), and 93 to 115 (LAGA…FKWL).

Belongs to the UPF0716 (FxsA) family.

It localises to the cell membrane. In Bacillus subtilis (strain 168), this protein is UPF0716 protein YtzA (ytzA).